The primary structure comprises 121 residues: Small ribosomal subunit protein uS13 (121 aa).

The interval 94-121 is disordered; it reads SLPVRGQNTKNNSRTRKGPRRTVANKKK. Residues 106 to 121 show a composition bias toward basic residues; the sequence is SRTRKGPRRTVANKKK.

Belongs to the universal ribosomal protein uS13 family. As to quaternary structure, part of the 30S ribosomal subunit. Forms a loose heterodimer with protein S19. Forms two bridges to the 50S subunit in the 70S ribosome.

Functionally, located at the top of the head of the 30S subunit, it contacts several helices of the 16S rRNA. In the 70S ribosome it contacts the 23S rRNA (bridge B1a) and protein L5 of the 50S subunit (bridge B1b), connecting the 2 subunits; these bridges are implicated in subunit movement. Contacts the tRNAs in the A and P-sites. This chain is Small ribosomal subunit protein uS13, found in Exiguobacterium sp. (strain ATCC BAA-1283 / AT1b).